The chain runs to 642 residues: Threonine--tRNA ligase (642 aa).

The TGS domain occupies 1–61 (MPVITLPDGS…ESDAQLAIIT (61 aa)). Positions 243–534 (DHRKIGKQLD…LTEEYAGFFP (292 aa)) are catalytic. Residues cysteine 334, histidine 385, and histidine 511 each contribute to the Zn(2+) site.

Belongs to the class-II aminoacyl-tRNA synthetase family. As to quaternary structure, homodimer. Requires Zn(2+) as cofactor.

It localises to the cytoplasm. It carries out the reaction tRNA(Thr) + L-threonine + ATP = L-threonyl-tRNA(Thr) + AMP + diphosphate + H(+). In terms of biological role, catalyzes the attachment of threonine to tRNA(Thr) in a two-step reaction: L-threonine is first activated by ATP to form Thr-AMP and then transferred to the acceptor end of tRNA(Thr). Also edits incorrectly charged L-seryl-tRNA(Thr). This chain is Threonine--tRNA ligase, found in Yersinia pseudotuberculosis serotype O:1b (strain IP 31758).